The chain runs to 257 residues: Diaminopimelate epimerase (257 aa).

Residues N6 and N57 each coordinate substrate. C66 serves as the catalytic Proton donor. Residues 67-68 (GN), N170, and 188-189 (ER) each bind substrate. C198 functions as the Proton acceptor in the catalytic mechanism. Residue 199–200 (GT) coordinates substrate.

The protein belongs to the diaminopimelate epimerase family. Homodimer.

The protein resides in the cytoplasm. The catalysed reaction is (2S,6S)-2,6-diaminopimelate = meso-2,6-diaminopimelate. Its pathway is amino-acid biosynthesis; L-lysine biosynthesis via DAP pathway; DL-2,6-diaminopimelate from LL-2,6-diaminopimelate: step 1/1. Catalyzes the stereoinversion of LL-2,6-diaminopimelate (L,L-DAP) to meso-diaminopimelate (meso-DAP), a precursor of L-lysine and an essential component of the bacterial peptidoglycan. This chain is Diaminopimelate epimerase, found in Chlorobaculum tepidum (strain ATCC 49652 / DSM 12025 / NBRC 103806 / TLS) (Chlorobium tepidum).